Consider the following 243-residue polypeptide: MNSLFLINESFTNGYISSVLDIISILAIFCGISVIVNKNPIISVLFLIGLFASVSSYLILLGLSFIGLAYLIVYIGAISILFLFILMLINIRISELQSNTNNSIPLTIILGISLSYSLFQLLPYDIAILSNFSSNINNNLYNLSMNKQNNGNFGINTTPAVSLQPKNNDLLFVTSKIWDGNLAESNHITTIGNVMYSNYSIWLFLASFILLLAMVGSIVIIMKSNASWGGALPNTRETKTEGR.

Helical transmembrane passes span 16 to 36, 41 to 61, 69 to 89, 104 to 124, and 201 to 221; these read ISSVLDIISILAIFCGISVIV, IISVLFLIGLFASVSSYLILL, AYLIVYIGAISILFLFILMLI, IPLTIILGISLSYSLFQLLPY, and IWLFLASFILLLAMVGSIVII.

It belongs to the complex I subunit 6 family.

Its subcellular location is the mitochondrion membrane. The enzyme catalyses a ubiquinone + NADH + 5 H(+)(in) = a ubiquinol + NAD(+) + 4 H(+)(out). Core subunit of the mitochondrial membrane respiratory chain NADH dehydrogenase (Complex I) that is believed to belong to the minimal assembly required for catalysis. Complex I functions in the transfer of electrons from NADH to the respiratory chain. The immediate electron acceptor for the enzyme is believed to be ubiquinone. The protein is NADH-ubiquinone oxidoreductase chain 6 (ndh-6) of Neurospora crassa (strain ATCC 24698 / 74-OR23-1A / CBS 708.71 / DSM 1257 / FGSC 987).